The chain runs to 247 residues: Ribonuclease PH (247 aa).

Phosphate contacts are provided by residues R87 and 125–127 (GTR).

This sequence belongs to the RNase PH family. As to quaternary structure, homohexameric ring arranged as a trimer of dimers.

The catalysed reaction is tRNA(n+1) + phosphate = tRNA(n) + a ribonucleoside 5'-diphosphate. In terms of biological role, phosphorolytic 3'-5' exoribonuclease that plays an important role in tRNA 3'-end maturation. Removes nucleotide residues following the 3'-CCA terminus of tRNAs; can also add nucleotides to the ends of RNA molecules by using nucleoside diphosphates as substrates, but this may not be physiologically important. Probably plays a role in initiation of 16S rRNA degradation (leading to ribosome degradation) during starvation. The polypeptide is Ribonuclease PH (Nostoc sp. (strain PCC 7120 / SAG 25.82 / UTEX 2576)).